Here is a 175-residue protein sequence, read N- to C-terminus: Polyadenylate-binding protein-interacting protein 6 (175 aa).

A PAM2-like motif is present at residues 7–17 (TLNPYAAAYVP). One can recognise a CUE domain in the interval 83–126 (EMDMDIEYLLATYPGLSQESINDVYLANTCDLDATIEMLNQLEI). A disordered region spans residues 145–175 (PEIITESSKQKNDGSSASSSSGIRNANVSSS). The segment covering 166 to 175 (GIRNANVSSS) has biased composition (polar residues).

This chain is Polyadenylate-binding protein-interacting protein 6 (CID6), found in Arabidopsis thaliana (Mouse-ear cress).